The chain runs to 174 residues: Crossover junction endodeoxyribonuclease RuvC (174 aa).

Catalysis depends on residues Asp8, Glu67, and Asp139. 3 residues coordinate Mg(2+): Asp8, Glu67, and Asp139.

Belongs to the RuvC family. In terms of assembly, homodimer which binds Holliday junction (HJ) DNA. The HJ becomes 2-fold symmetrical on binding to RuvC with unstacked arms; it has a different conformation from HJ DNA in complex with RuvA. In the full resolvosome a probable DNA-RuvA(4)-RuvB(12)-RuvC(2) complex forms which resolves the HJ. Mg(2+) is required as a cofactor.

It is found in the cytoplasm. It catalyses the reaction Endonucleolytic cleavage at a junction such as a reciprocal single-stranded crossover between two homologous DNA duplexes (Holliday junction).. The RuvA-RuvB-RuvC complex processes Holliday junction (HJ) DNA during genetic recombination and DNA repair. Endonuclease that resolves HJ intermediates. Cleaves cruciform DNA by making single-stranded nicks across the HJ at symmetrical positions within the homologous arms, yielding a 5'-phosphate and a 3'-hydroxyl group; requires a central core of homology in the junction. The consensus cleavage sequence is 5'-(A/T)TT(C/G)-3'. Cleavage occurs on the 3'-side of the TT dinucleotide at the point of strand exchange. HJ branch migration catalyzed by RuvA-RuvB allows RuvC to scan DNA until it finds its consensus sequence, where it cleaves and resolves the cruciform DNA. The polypeptide is Crossover junction endodeoxyribonuclease RuvC (Pseudomonas syringae pv. syringae (strain B728a)).